Reading from the N-terminus, the 337-residue chain is Dihydroorotate dehydrogenase (quinone) (337 aa).

Residues 61-65 (AGLDK) and Thr85 each bind FMN. Lys65 contacts substrate. Residue 110–114 (NRMGF) participates in substrate binding. Residues Asn138 and Asn171 each coordinate FMN. Asn171 contacts substrate. The active-site Nucleophile is Ser174. Asn176 contributes to the substrate binding site. FMN is bound by residues Lys216 and Thr244. Position 245-246 (245-246 (NT)) interacts with substrate. FMN contacts are provided by residues Gly267, Gly296, and 317 to 318 (YS).

Belongs to the dihydroorotate dehydrogenase family. Type 2 subfamily. As to quaternary structure, monomer. Requires FMN as cofactor.

Its subcellular location is the cell membrane. It catalyses the reaction (S)-dihydroorotate + a quinone = orotate + a quinol. Its pathway is pyrimidine metabolism; UMP biosynthesis via de novo pathway; orotate from (S)-dihydroorotate (quinone route): step 1/1. Its function is as follows. Catalyzes the conversion of dihydroorotate to orotate with quinone as electron acceptor. The sequence is that of Dihydroorotate dehydrogenase (quinone) from Thiobacillus denitrificans (strain ATCC 25259 / T1).